We begin with the raw amino-acid sequence, 496 residues long: Pituitary adenylate cyclase-activating polypeptide type I receptor (496 aa).

Residues 1-20 form the signal peptide; it reads MARTLQLSLTALLLLPMAIA. The Extracellular portion of the chain corresponds to 21–152; sequence MHSDCIFKKE…SGDQDYYYLS (132 aa). 3 cysteine pairs are disulfide-bonded: Cys-34/Cys-63, Cys-54/Cys-118, and Cys-77/Cys-134. Asn-48, Asn-60, and Asn-117 each carry an N-linked (GlcNAc...) asparagine glycan. The tract at residues 125–139 is important for ADCYAP1/PACAP ligand binding and specificity; the sequence is EPFPHYFDACGFDDY. Residues 125–139 are important for ligand binding and specificity; that stretch reads EPFPHYFDACGFDDY. The helical transmembrane segment at 153–177 threads the bilayer; that stretch reads VKALYTVGYSTSLVTLTTAMVILCR. At 178-187 the chain is on the cytoplasmic side; that stretch reads FRKLHCTRNF. A helical transmembrane segment spans residues 188–208; the sequence is IHMNLFVSFMLRAISVFIKDW. At 209-223 the chain is on the extracellular side; that stretch reads ILYAEQDSSHCFVST. A helical membrane pass occupies residues 224–249; the sequence is VECKAVMVFFHYCVVSNYFWLFIEGL. Cys-226 and Cys-296 form a disulfide bridge. At 250-267 the chain is on the cytoplasmic side; sequence YLFTLLVETFFPERRYFY. The helical transmembrane segment at 268–290 threads the bilayer; that stretch reads WYTIIGWGTPTVCVTVWAVLRLY. The Extracellular segment spans residues 291 to 302; sequence FDDAGCWDMNDS. Residues 303–329 traverse the membrane as a helical segment; sequence TALWWVIKGPVVGSIMVNFVLFIGIII. Topologically, residues 330 to 347 are cytoplasmic; that stretch reads ILVQKLQSPDMGGNESSI. The helical transmembrane segment at 348–402 threads the bilayer; sequence YFSCVQKCYCKPQRAQQHSCKMSELSTITLRLARSTLLLIPLFGIHYTVFAFSPE. Topologically, residues 403–407 are extracellular; the sequence is NVSKR. A helical transmembrane segment spans residues 408–431; the sequence is ERLVFELGLGSFQGFVVAVLYCFL. The Cytoplasmic portion of the chain corresponds to 432–496; the sequence is NGEVQAEIKR…SSLPADNLAT (65 aa). Residues Ser-462 and Ser-475 each carry the phosphoserine modification.

Belongs to the G-protein coupled receptor 2 family. As to quaternary structure, interacts with maxadilan, a vasodilator peptide from Lutzomyia longipalpis saliva; the interaction results in ADCYAP1R1 activation.

The protein localises to the cell membrane. Its function is as follows. G protein-coupled receptor activated by the neuropeptide pituitary adenylate cyclase-activating polypeptide (ADCYAP1/PACAP). Binds both PACAP27 and PACAP38 bioactive peptides. Ligand binding causes a conformation change that triggers signaling via guanine nucleotide-binding proteins (G proteins) and modulates the activity of downstream effectors. Activates cAMP-dependent pathway. May regulate the release of adrenocorticotropin, luteinizing hormone, growth hormone, prolactin, epinephrine, and catecholamine. May play a role in spermatogenesis and sperm motility. Causes smooth muscle relaxation and secretion in the gastrointestinal tract. In Mus musculus (Mouse), this protein is Pituitary adenylate cyclase-activating polypeptide type I receptor.